We begin with the raw amino-acid sequence, 476 residues long: NAC domain-containing protein 86 (476 aa).

In terms of domain architecture, NAC spans 6–157 (LPPGFRFHPT…AYALCRVFKK (152 aa)). Residues 105–163 (IGTKKTLVYYRGRAPHGIRTGWVMHEYRLDESECEPSAFGMQDAYALCRVFKKIVIEAK) mediate DNA binding.

Expressed in a few sieve element cells before enucleation and in phloem-pole pericycle cells.

It is found in the nucleus. Functionally, transcription factor directing sieve element enucleation and cytosol degradation. Not required for formation of lytic vacuoles. Regulates, with NAC045, the transcription of NEN1, NEN2, NEN3, NEN4, RTM1, RTM2, UBP16, PLDZETA, ABCB10 and At1g26450. The chain is NAC domain-containing protein 86 from Arabidopsis thaliana (Mouse-ear cress).